A 24-amino-acid polypeptide reads, in one-letter code: APKNIVLFGATGMTGQVTLGQALE.

Residues G9, T11, G12, and T14 each coordinate NADP(+).

The protein belongs to the BLVRB family. As to quaternary structure, monomer. In terms of tissue distribution, detected in erythrocytes (at protein level).

The protein resides in the cytoplasm. It catalyses the reaction reduced riboflavin + NADP(+) = riboflavin + NADPH + 2 H(+). It carries out the reaction bilirubin IXbeta + NADP(+) = biliverdin IXbeta + NADPH + H(+). The catalysed reaction is FMNH2 + NAD(+) = FMN + NADH + 2 H(+). The enzyme catalyses FMNH2 + NADP(+) = FMN + NADPH + 2 H(+). It catalyses the reaction S-nitroso-CoA + L-cysteinyl-[protein] = S-nitroso-L-cysteinyl-[protein] + CoA. It carries out the reaction L-cysteinyl-[SCAN] + S-nitroso-CoA = S-nitroso-L-cysteinyl-[SCAN] + CoA. The catalysed reaction is S-nitroso-L-cysteinyl-[SCAN] + L-cysteinyl-[protein] = L-cysteinyl-[SCAN] + S-nitroso-L-cysteinyl-[protein]. Its function is as follows. Enzyme that can both act as a NAD(P)H-dependent reductase and a S-nitroso-CoA-dependent nitrosyltransferase. Promotes fetal heme degradation during development. Also expressed in adult tissues, where it acts as a regulator of hematopoiesis, intermediary metabolism (glutaminolysis, glycolysis, TCA cycle and pentose phosphate pathway) and insulin signaling. Has a broad specificity oxidoreductase activity by catalyzing the NAD(P)H-dependent reduction of a variety of flavins, such as riboflavin, FAD or FMN, biliverdins, methemoglobin and PQQ (pyrroloquinoline quinone). Contributes to fetal heme catabolism by catalyzing reduction of biliverdin IXbeta into bilirubin IXbeta in the liver. Biliverdin IXbeta, which constitutes the major heme catabolite in the fetus is not present in adult. Does not reduce bilirubin IXalpha. Can also reduce the complexed Fe(3+) iron to Fe(2+) in the presence of FMN and NADPH. Acts as a protein nitrosyltransferase by catalyzing nitrosylation of cysteine residues of target proteins, such as HMOX2, INSR and IRS1. S-nitroso-CoA-dependent nitrosyltransferase activity is mediated via a 'ping-pong' mechanism: BLVRB first associates with both S-nitroso-CoA and protein substrate, nitric oxide group is then transferred from S-nitroso-CoA to Cys residues of BLVRB and from S-nitroso-BLVRB to the protein substrate. Inhibits insulin signaling by mediating nitrosylation of INSR and IRS1, leading to their inhibition. In Aquarana catesbeiana (American bullfrog), this protein is Flavin reductase (NADPH) (BLVRB).